Consider the following 433-residue polypeptide: Histidinol dehydrogenase (433 aa).

NAD(+) is bound by residues tyrosine 133, glutamine 194, and asparagine 217. Substrate is bound by residues serine 240, glutamine 262, and histidine 265. Residues glutamine 262 and histidine 265 each coordinate Zn(2+). Active-site proton acceptor residues include glutamate 330 and histidine 331. Residues histidine 331, aspartate 364, glutamate 418, and histidine 423 each contribute to the substrate site. Residue aspartate 364 coordinates Zn(2+). Histidine 423 lines the Zn(2+) pocket.

The protein belongs to the histidinol dehydrogenase family. It depends on Zn(2+) as a cofactor.

It catalyses the reaction L-histidinol + 2 NAD(+) + H2O = L-histidine + 2 NADH + 3 H(+). It participates in amino-acid biosynthesis; L-histidine biosynthesis; L-histidine from 5-phospho-alpha-D-ribose 1-diphosphate: step 9/9. Catalyzes the sequential NAD-dependent oxidations of L-histidinol to L-histidinaldehyde and then to L-histidine. The polypeptide is Histidinol dehydrogenase (Dechloromonas aromatica (strain RCB)).